A 304-amino-acid polypeptide reads, in one-letter code: Xylanase inhibitor protein 1 (304 aa).

The signal sequence occupies residues 1–29; that stretch reads MVALGRRSWLVPLAMVLAVSSCLAGPAMA. In terms of domain architecture, GH18 spans 34-304; sequence GQMTVFWGRN…GYGKTVKYWA (271 aa). 2 disulfide bridges follow: Cys53/Cys93 and Cys190/Cys219.

This sequence belongs to the glycosyl hydrolase 18 family. Xylanase inhibitor subfamily. In terms of assembly, binds to fungal GH11 xylanases. In terms of tissue distribution, constitutively expressed in shoots.

Its subcellular location is the secreted. Functionally, fungal xylanase inhibitor. Possesses competitive inhibiting activity against fungal endo-1,4-beta-D-xylanases belonging to glycoside hydrolase family 11 (GH11). May function in plant defense against secreted fungal pathogen xylanases. Is similar to class III chitinases, but does not exhibit chitinase activity. This chain is Xylanase inhibitor protein 1, found in Oryza sativa subsp. japonica (Rice).